Reading from the N-terminus, the 359-residue chain is UDP-N-acetylglucosamine--N-acetylmuramyl-(pentapeptide) pyrophosphoryl-undecaprenol N-acetylglucosamine transferase (359 aa).

UDP-N-acetyl-alpha-D-glucosamine-binding positions include threonine 14 to glycine 16, asparagine 126, arginine 166, serine 194, isoleucine 248, and glutamine 293.

It belongs to the glycosyltransferase 28 family. MurG subfamily.

It localises to the cell inner membrane. It catalyses the reaction di-trans,octa-cis-undecaprenyl diphospho-N-acetyl-alpha-D-muramoyl-L-alanyl-D-glutamyl-meso-2,6-diaminopimeloyl-D-alanyl-D-alanine + UDP-N-acetyl-alpha-D-glucosamine = di-trans,octa-cis-undecaprenyl diphospho-[N-acetyl-alpha-D-glucosaminyl-(1-&gt;4)]-N-acetyl-alpha-D-muramoyl-L-alanyl-D-glutamyl-meso-2,6-diaminopimeloyl-D-alanyl-D-alanine + UDP + H(+). It functions in the pathway cell wall biogenesis; peptidoglycan biosynthesis. Its function is as follows. Cell wall formation. Catalyzes the transfer of a GlcNAc subunit on undecaprenyl-pyrophosphoryl-MurNAc-pentapeptide (lipid intermediate I) to form undecaprenyl-pyrophosphoryl-MurNAc-(pentapeptide)GlcNAc (lipid intermediate II). This is UDP-N-acetylglucosamine--N-acetylmuramyl-(pentapeptide) pyrophosphoryl-undecaprenol N-acetylglucosamine transferase from Verminephrobacter eiseniae (strain EF01-2).